Consider the following 358-residue polypeptide: Fructose-bisphosphate aldolase (358 aa).

Residue S61 coordinates D-glyceraldehyde 3-phosphate. Residue D108 is the Proton donor of the active site. Zn(2+) is bound by residues H109, D143, E173, and H225. G226 serves as a coordination point for dihydroxyacetone phosphate. Residue H264 participates in Zn(2+) binding. Residues 265–267 (GGS) and 286–289 (NIDT) contribute to the dihydroxyacetone phosphate site. Residues T289, T312, T340, and T342 each carry the phosphothreonine modification.

Belongs to the class II fructose-bisphosphate aldolase family. Homodimer. Requires Zn(2+) as cofactor.

The enzyme catalyses beta-D-fructose 1,6-bisphosphate = D-glyceraldehyde 3-phosphate + dihydroxyacetone phosphate. It participates in carbohydrate degradation; glycolysis; D-glyceraldehyde 3-phosphate and glycerone phosphate from D-glucose: step 4/4. Functionally, catalyzes the aldol condensation of dihydroxyacetone phosphate (DHAP or glycerone-phosphate) with glyceraldehyde 3-phosphate (G3P) to form fructose 1,6-bisphosphate (FBP) in gluconeogenesis and the reverse reaction in glycolysis. In Schizosaccharomyces pombe (strain 972 / ATCC 24843) (Fission yeast), this protein is Fructose-bisphosphate aldolase (fba1).